The primary structure comprises 1168 residues: Transcription-repair-coupling factor (1168 aa).

In terms of domain architecture, Helicase ATP-binding spans 633–794; it reads DMQKSRPMDR…MLGVRDLSVI (162 aa). ATP is bound at residue 646 to 653; that stretch reads GDVGYGKT. The DEEQ box motif lies at 747-750; it reads DEEQ. In terms of domain architecture, Helicase C-terminal spans 808–969; that stretch reads VLEQNMSFIK…GFKIAMRDLN (162 aa).

It in the N-terminal section; belongs to the UvrB family. In the C-terminal section; belongs to the helicase family. RecG subfamily.

Its subcellular location is the cytoplasm. Functionally, couples transcription and DNA repair by recognizing RNA polymerase (RNAP) stalled at DNA lesions. Mediates ATP-dependent release of RNAP and its truncated transcript from the DNA, and recruitment of nucleotide excision repair machinery to the damaged site. This is Transcription-repair-coupling factor from Staphylococcus aureus (strain Mu50 / ATCC 700699).